A 287-amino-acid chain; its full sequence is 4-diphosphocytidyl-2-C-methyl-D-erythritol kinase (287 aa).

The active site involves Lys-11. 93 to 103 is an ATP binding site; that stretch reads PFGAGLGGGSS. Asp-135 is an active-site residue.

It belongs to the GHMP kinase family. IspE subfamily.

The enzyme catalyses 4-CDP-2-C-methyl-D-erythritol + ATP = 4-CDP-2-C-methyl-D-erythritol 2-phosphate + ADP + H(+). It functions in the pathway isoprenoid biosynthesis; isopentenyl diphosphate biosynthesis via DXP pathway; isopentenyl diphosphate from 1-deoxy-D-xylulose 5-phosphate: step 3/6. Its function is as follows. Catalyzes the phosphorylation of the position 2 hydroxy group of 4-diphosphocytidyl-2C-methyl-D-erythritol. The sequence is that of 4-diphosphocytidyl-2-C-methyl-D-erythritol kinase from Pelodictyon phaeoclathratiforme (strain DSM 5477 / BU-1).